We begin with the raw amino-acid sequence, 192 residues long: Vascular endothelial growth factor A (192 aa).

An N-terminal signal peptide occupies residues 1–26 (MNFLLSWIHWGLAALLYFHNAKVLQA). Intrachain disulfides connect C52–C94, C83–C128, and C87–C130. The N-linked (GlcNAc...) asparagine glycan is linked to N101.

Belongs to the PDGF/VEGF growth factor family. In terms of assembly, homodimer; disulfide-linked. Also found as heterodimer with PGF Interacts with FLT1/VEGFR1 and KDR/VEGFR2 receptors, heparan sulfate and heparin. In terms of tissue distribution, expressed by the venom gland, and probably other tissues.

The protein localises to the secreted. Functionally, growth factor active in angiogenesis, vasculogenesis and endothelial cell growth. Induces endothelial cell proliferation, promotes cell migration, inhibits apoptosis and induces permeabilization of blood vessels. This is Vascular endothelial growth factor A from Vipera ammodytes ammodytes (Western sand viper).